A 917-amino-acid polypeptide reads, in one-letter code: MEPGLSGERRSMAPLLEYERQQVLELLDSDGLVVCARGLGTDRLLYHFLRLHCHPACLVLVLNTQPAEEEYFINQLKIEGVEHLPRRVTNEIASNSRYEVYTQGGIIFATSRILVVDFLTGRIPSDLITGILVYRAHRIIESCQEAFILRLFRQKNKRGFIKAFTDNAVAFDTGFCHVERVMRNLFVRKLYLWPRFHVAVNSFLEQHKPEVVEIHVSMTPAMLAIQTAILDILNACLKELKCHNPSLEVEDLSLENALGKPFDKTIRHYLDPLWHQLGAKTKSLVQDLKILRTLLQYLSQYDCVTFLNLLESLRATEKVFGQNSGWLFLDASTSMFVNARARVYRVPDVKLNKKAKTSEKTSSPEVQETKKELVLESNPKWEALTDVLKEIEAENKESEALGGPGRVLICASDDRTCCQLRDYLSAGAETFLLRLYRKTFEKDGKAEEVWVNVRKGDGPKRTTKSDKRPKAAPNKERASAKRGAPLKRKKQELTLTQVLGSAEEPPEDKALEEDLCRQTSSSPEGCGVEIKRESFDLNVSSDAAYGILKEPLTIIHPLLGCSDPYALTRVLHEVEPRYVVLYDAELTFVRQLEIYRASRPGKPLRVYFLIYGGSTEEQRYLTALRKEKEAFEKLIREKASMVVPEEREGRDETNLDLARGSAALDAPTDTRKAGGQEQNGTQSSIVVDMREFRSELPSLIHRRGIDIEPVTLEVGDYILTPELCVERKSVSDLIGSLHSGRLYSQCLAMSRYYRRPVLLIEFDPSKPFSLAPRGAFFQEMSSSDVSSKLTLLTLHFPRLRLLWCPSPHATAELFEELKQNKPQPDAATAMAITADSETLPESDRYNPGPQDFVLKMPGVNAKNCRSLMNQVKNIAELATLSLERLTTILGHSGNAKQLHDFLHTAYADLVSKGRVRK.

Residues 1–457 are helicase-like; it reads MEPGLSGERR…EVWVNVRKGD (457 aa). 2 leucine-zipper regions span residues 233–254 and 270–298; these read LNAC…DLSL and LDPL…LQYL. Lys-289 is subject to N6-acetyllysine. Positions 454–479 are enriched in basic and acidic residues; sequence RKGDGPKRTTKSDKRPKAAPNKERAS. Disordered regions lie at residues 454–524 and 643–681; these read RKGD…SSPE and VPEE…QNGT. A Nuclear localization signal motif is present at residues 487–492; the sequence is KRKKQE. A compositionally biased stretch (basic and acidic residues) spans 507–516; that stretch reads EDKALEEDLC. Ser-522 carries the post-translational modification Phosphoserine. The segment covering 643 to 653 has biased composition (basic and acidic residues); that stretch reads VPEEREGRDET. Residues 659-814 are nuclease; the sequence is RGSAALDAPT…PSPHATAELF (156 aa). The 81-residue stretch at 684-764 folds into the ERCC4 domain; the sequence is SIVVDMREFR…RPVLLIEFDP (81 aa). A Phosphoserine modification is found at Ser-765. Residues 838–906 form a hhH2, dimerization with ERCC1 region; that stretch reads TLPESDRYNP…QLHDFLHTAY (69 aa). N6-acetyllysine is present on Lys-912.

It belongs to the XPF family. Heterodimer composed of ERCC1 and ERCC4/XPF. Interacts with SLX4/BTBD12; this interaction is direct and links the ERCC1-ERCC4/XPF complex to SLX4, which may coordinate the action of the structure-specific endonuclease during DNA repair. Mg(2+) serves as cofactor. Post-translationally, acetylation at Lys-912 by KAT5 promotes interaction with ERCC1 by disrupting a salt bridge between Asp-908 and Lys-912, thereby exposing a second binding site for ERCC1. Deacetylated by SIRT1.

Its subcellular location is the nucleus. It is found in the chromosome. Functionally, catalytic component of a structure-specific DNA repair endonuclease responsible for the 5-prime incision during DNA repair, and which is essential for nucleotide excision repair (NER) and interstrand cross-link (ICL) repair. In Mus musculus (Mouse), this protein is DNA repair endonuclease XPF.